The following is a 122-amino-acid chain: Cytochrome c-556 (122 aa).

M11, C111, C114, and H115 together coordinate heme. Heme c-binding residues include M11, C111, C114, and H115.

Monomer. In terms of processing, binds 1 heme c group covalently per subunit.

Low-spin monoheme cytochrome c. This chain is Cytochrome c-556, found in Agrobacterium tumefaciens (strain B2A).